We begin with the raw amino-acid sequence, 333 residues long: Ferrochelatase (333 aa).

Fe cation-binding residues include H202 and E284.

Belongs to the ferrochelatase family.

Its subcellular location is the cytoplasm. It catalyses the reaction heme b + 2 H(+) = protoporphyrin IX + Fe(2+). The protein operates within porphyrin-containing compound metabolism; protoheme biosynthesis; protoheme from protoporphyrin-IX: step 1/1. Catalyzes the ferrous insertion into protoporphyrin IX. In Francisella tularensis subsp. novicida (strain U112), this protein is Ferrochelatase.